The following is a 174-amino-acid chain: NADH-ubiquinone oxidoreductase chain 6 (174 aa).

4 consecutive transmembrane segments (helical) span residues 24 to 44 (LALGLTLLIQTIFVCLLSGLM), 53 to 73 (ILFLIFLGGMLVLFIYVTSLA), 82 to 102 (IKLTLFSMFILFFMFILSMIL), and 143 to 163 (FVTILLMNYLLITLIVVVKIT).

This sequence belongs to the complex I subunit 6 family.

The protein localises to the mitochondrion membrane. The enzyme catalyses a ubiquinone + NADH + 5 H(+)(in) = a ubiquinol + NAD(+) + 4 H(+)(out). Functionally, core subunit of the mitochondrial membrane respiratory chain NADH dehydrogenase (Complex I) that is believed to belong to the minimal assembly required for catalysis. Complex I functions in the transfer of electrons from NADH to the respiratory chain. The immediate electron acceptor for the enzyme is believed to be ubiquinone. The sequence is that of NADH-ubiquinone oxidoreductase chain 6 (mt:ND6) from Drosophila yakuba (Fruit fly).